A 214-amino-acid polypeptide reads, in one-letter code: Pyridoxine/pyridoxamine 5'-phosphate oxidase (214 aa).

Substrate-binding positions include 9 to 12 and K67; that span reads RKDY. FMN-binding positions include 62 to 67, 77 to 78, R83, K84, and Q106; these read RMVLLK and FT. Residues Y124, R128, and S132 each contribute to the substrate site. FMN-binding positions include 141-142 and W186; that span reads QS. Position 192–194 (192–194) interacts with substrate; sequence RLH. FMN is bound at residue R196.

Belongs to the pyridoxamine 5'-phosphate oxidase family. Homodimer. FMN is required as a cofactor.

The catalysed reaction is pyridoxamine 5'-phosphate + O2 + H2O = pyridoxal 5'-phosphate + H2O2 + NH4(+). The enzyme catalyses pyridoxine 5'-phosphate + O2 = pyridoxal 5'-phosphate + H2O2. Its pathway is cofactor metabolism; pyridoxal 5'-phosphate salvage; pyridoxal 5'-phosphate from pyridoxamine 5'-phosphate: step 1/1. It participates in cofactor metabolism; pyridoxal 5'-phosphate salvage; pyridoxal 5'-phosphate from pyridoxine 5'-phosphate: step 1/1. In terms of biological role, catalyzes the oxidation of either pyridoxine 5'-phosphate (PNP) or pyridoxamine 5'-phosphate (PMP) into pyridoxal 5'-phosphate (PLP). This Trichormus variabilis (strain ATCC 29413 / PCC 7937) (Anabaena variabilis) protein is Pyridoxine/pyridoxamine 5'-phosphate oxidase.